The chain runs to 199 residues: Protein GrpE (199 aa).

Basic and acidic residues predominate over residues 1-24 (MSKQNKKDWKKFKDEHKEEHKVEN). Positions 1–52 (MSKQNKKDWKKFKDEHKEEHKVENEILEEETDEESQHQEPALGHPSYTALEE) are disordered.

It belongs to the GrpE family. Homodimer.

The protein localises to the cytoplasm. Its function is as follows. Participates actively in the response to hyperosmotic and heat shock by preventing the aggregation of stress-denatured proteins, in association with DnaK and GrpE. It is the nucleotide exchange factor for DnaK and may function as a thermosensor. Unfolded proteins bind initially to DnaJ; upon interaction with the DnaJ-bound protein, DnaK hydrolyzes its bound ATP, resulting in the formation of a stable complex. GrpE releases ADP from DnaK; ATP binding to DnaK triggers the release of the substrate protein, thus completing the reaction cycle. Several rounds of ATP-dependent interactions between DnaJ, DnaK and GrpE are required for fully efficient folding. The chain is Protein GrpE from Legionella pneumophila.